The chain runs to 771 residues: Hyperosmolality-gated Ca2+ permeable channel 1.3 (771 aa).

A helical transmembrane segment spans residues 7-27 (IGVAAAINILTAIIFLLAFAI). A Phosphoserine modification is found at serine 54. A run of 9 helical transmembrane segments spans residues 101–121 (IYLI…SILV), 158–178 (FWTH…VLMK), 375–395 (LIMH…IAFV), 427–447 (FLPG…LMVM), 467–487 (YYIF…SAFE), 512–532 (ATFF…GEIL), 584–604 (PVTP…YLVF), 630–650 (IISA…TKGA), and 651–671 (AQST…HRYC). The segment at 744–771 (VPTKRQSRINTPAVSHASRGSSRSPPSK) is disordered. The span at 751–771 (RINTPAVSHASRGSSRSPPSK) shows a compositional bias: polar residues.

Belongs to the CSC1 (TC 1.A.17) family. In terms of processing, phosphorylated at Ser-54 by BIK1 in response to pathogen-associated molecular pattern (PAMP) perception, promoting its activation. In terms of tissue distribution, preferentially expressed in guard cells.

Its subcellular location is the cell membrane. The enzyme catalyses Ca(2+)(in) = Ca(2+)(out). Its activity is regulated as follows. Activated following phosphorylation at Ser-54 by BIK1. Functionally, calcium-permeable channel that plays a key role in plant stomatal immunity. In response to pathogen-associated molecular pattern (PAMP) perception, phosphorylated and activated by BIK1, triggering rapid influx of calcium ions across the plasma membrane, leading to stomatal closure. The sequence is that of Hyperosmolality-gated Ca2+ permeable channel 1.3 from Arabidopsis thaliana (Mouse-ear cress).